The primary structure comprises 627 residues: (+)-3-carene synthase 1, chloroplastic (627 aa).

The N-terminal 36 residues, M1 to V36, are a transit peptide targeting the chloroplast. 3 residues coordinate Mg(2+): D378, D382, and D530. The DDXXD motif signature appears at D378–D382.

The protein belongs to the terpene synthase family. Tpsd subfamily. Mg(2+) is required as a cofactor. The cofactor is Mn(2+).

It localises to the plastid. The protein resides in the chloroplast. It carries out the reaction (2E)-geranyl diphosphate = (+)-car-3-ene + diphosphate. It functions in the pathway terpene metabolism; oleoresin biosynthesis. Its function is as follows. Terpene synthase (TPS) involved in the biosynthesis of monoterpene natural products included in conifer oleoresin secretions and volatile emissions; these compounds contribute to biotic and abiotic stress defense against herbivores (e.g. insect attack by white pine weevil P.strobi) and pathogens. Catalyzes the conversion of (2E)-geranyl diphosphate (GPP) to (+)-car-3-ene. This Picea sitchensis (Sitka spruce) protein is (+)-3-carene synthase 1, chloroplastic.